The sequence spans 243 residues: Adenosylcobinamide-GDP ribazoletransferase (243 aa).

Transmembrane regions (helical) follow at residues 31-51 (LLFY…FNAL), 55-75 (APLL…SGGL), 109-129 (IAVV…VALI), 135-155 (IGLL…FLGT), and 188-208 (VVLA…CFYW).

The protein belongs to the CobS family. Requires Mg(2+) as cofactor.

Its subcellular location is the cell inner membrane. The catalysed reaction is alpha-ribazole + adenosylcob(III)inamide-GDP = adenosylcob(III)alamin + GMP + H(+). The enzyme catalyses alpha-ribazole 5'-phosphate + adenosylcob(III)inamide-GDP = adenosylcob(III)alamin 5'-phosphate + GMP + H(+). It functions in the pathway cofactor biosynthesis; adenosylcobalamin biosynthesis; adenosylcobalamin from cob(II)yrinate a,c-diamide: step 7/7. In terms of biological role, joins adenosylcobinamide-GDP and alpha-ribazole to generate adenosylcobalamin (Ado-cobalamin). Also synthesizes adenosylcobalamin 5'-phosphate from adenosylcobinamide-GDP and alpha-ribazole 5'-phosphate. The chain is Adenosylcobinamide-GDP ribazoletransferase from Pseudomonas syringae pv. tomato (strain ATCC BAA-871 / DC3000).